Here is a 954-residue protein sequence, read N- to C-terminus: Glycine dehydrogenase (decarboxylating) (954 aa).

K704 carries the post-translational modification N6-(pyridoxal phosphate)lysine.

Belongs to the GcvP family. The glycine cleavage system is composed of four proteins: P, T, L and H. The cofactor is pyridoxal 5'-phosphate.

The catalysed reaction is N(6)-[(R)-lipoyl]-L-lysyl-[glycine-cleavage complex H protein] + glycine + H(+) = N(6)-[(R)-S(8)-aminomethyldihydrolipoyl]-L-lysyl-[glycine-cleavage complex H protein] + CO2. The glycine cleavage system catalyzes the degradation of glycine. The P protein binds the alpha-amino group of glycine through its pyridoxal phosphate cofactor; CO(2) is released and the remaining methylamine moiety is then transferred to the lipoamide cofactor of the H protein. This is Glycine dehydrogenase (decarboxylating) from Rhizobium etli (strain CIAT 652).